The following is a 707-amino-acid chain: Tubulin polyglutamylase ttll-11 (707 aa).

Residues 124-488 form the TTL domain; that stretch reads RFTIDTSRAK…PLVRDTLLLV (365 aa). ATP contacts are provided by residues 279-282, Lys293, and Asp295; that span reads QEYV. The tract at residues 675–707 is disordered; sequence RNRSGTNGRKQNFTDDNNNPNSFAHLPKINERL. Over residues 677–696 the composition is skewed to polar residues; that stretch reads RSGTNGRKQNFTDDNNNPNS.

Belongs to the tubulin--tyrosine ligase family. As to expression, expressed in amphid sensory neurons. Weakly expressed in body wall muscles. Isoform a: Specifically expressed in ciliated sensory neurons in the head, including the IL1s, OLQ, head CEP, and amphid neurons. In the male tail, expressed in HOA, RnA, and phasmid neurons. Isoform b: Specifically expressed in male and hermaphrodite IL2 ciliated sensory neurons, and in male-specific CEM, HOB and RnB ciliated sensory neurons.

It localises to the cell projection. It is found in the axon. Its subcellular location is the perikaryon. The protein localises to the dendrite. The protein resides in the cilium. It localises to the extracellular vesicle. It catalyses the reaction L-glutamyl-[protein] + L-glutamate + ATP = gamma-L-glutamyl-L-glutamyl-[protein] + ADP + phosphate + H(+). Polyglutamylase which preferentially modifies tubulin. Involved in the side-chain initiation step of the polyglutamylation reaction. By controlling tubulin glutamylation, regulates ciliary specialization and motor-based transport. Promotes the formation of A and B tubule singlets by splaying microtubule doublets in cilia. Together with ttll-4 and 5, required for male mating. Its function is as follows. Specifically promotes tubulin glutamylation in a subset of ciliated neurons including amphid, phasmid, CEP and RnA neurons. Functionally, specifically promotes tubulin glutamylation in male ciliated CEM, HOB and RnB neurons that release bioactive extracellular vesicles. Regulates the localization of TRP channel pdk-2 in male CEM, HOB and RnB neurons. Regulates the environmental release of bioactive extracellular vesicles in cilia. This Caenorhabditis elegans protein is Tubulin polyglutamylase ttll-11.